A 226-amino-acid polypeptide reads, in one-letter code: ATP synthase subunit a (226 aa).

5 helical membrane passes run 20 to 40 (LNWFSTFIGLLIIPSTFWLMP), 74 to 94 (FVSLFSLIMFNNFLGLFPYIF), 100 to 120 (LTLTLTLAFPLWLSFMLYGWI), 162 to 182 (LTANMIAGHLLMTLLGNTGPM), and 187 to 207 (IILSMILITQIALLVLESAVA).

This sequence belongs to the ATPase A chain family. F-type ATPases have 2 components, CF(1) - the catalytic core - and CF(0) - the membrane proton channel. CF(1) has five subunits: alpha(3), beta(3), gamma(1), delta(1), epsilon(1). CF(0) has three main subunits: a, b and c.

The protein localises to the mitochondrion inner membrane. Its function is as follows. Mitochondrial membrane ATP synthase (F(1)F(0) ATP synthase or Complex V) produces ATP from ADP in the presence of a proton gradient across the membrane which is generated by electron transport complexes of the respiratory chain. F-type ATPases consist of two structural domains, F(1) - containing the extramembraneous catalytic core and F(0) - containing the membrane proton channel, linked together by a central stalk and a peripheral stalk. During catalysis, ATP synthesis in the catalytic domain of F(1) is coupled via a rotary mechanism of the central stalk subunits to proton translocation. Key component of the proton channel; it may play a direct role in the translocation of protons across the membrane. The sequence is that of ATP synthase subunit a (mt:ATPase6) from Aedes albopictus (Asian tiger mosquito).